The primary structure comprises 92 residues: Small ribosomal subunit protein uS19 (92 aa).

The protein belongs to the universal ribosomal protein uS19 family.

In terms of biological role, protein S19 forms a complex with S13 that binds strongly to the 16S ribosomal RNA. The sequence is that of Small ribosomal subunit protein uS19 from Jannaschia sp. (strain CCS1).